We begin with the raw amino-acid sequence, 629 residues long: Pentatricopeptide repeat-containing protein At1g62930, chloroplastic (629 aa).

The transit peptide at 1–41 directs the protein to the chloroplast; that stretch reads MTSCVHLGIVASQSKKMSLAKRFAQLRKASPLFSLRGVYFS. PPR repeat units lie at residues 79-113, 114-148, 149-183, 184-218, 219-253, 254-288, 289-323, 324-358, 359-393, 394-428, 429-463, 464-498, 499-533, 534-568, and 569-603; these read SIVE…RISY, DLYS…GYEP, DIVT…EYQP, NTVT…GCQP, DLFT…KIEA, DVVI…GIRP, NVVT…KINP, NVVT…SIDP, DIFT…DCFP, NVVT…GLVG, NTVT…GVPP, DIIT…KMEP, DIYT…GVKP, NVII…GTLP, and NSGT…GFVG.

Belongs to the PPR family. P subfamily.

It localises to the plastid. The protein resides in the chloroplast. The chain is Pentatricopeptide repeat-containing protein At1g62930, chloroplastic from Arabidopsis thaliana (Mouse-ear cress).